A 314-amino-acid polypeptide reads, in one-letter code: Epithelial cell adhesion molecule (314 aa).

A signal peptide spans 1–23 (MAPPQVLAFGLLLAAATAAVAAA). The Extracellular portion of the chain corresponds to 24 to 265 (QQGCVCENYK…PPEFSMQGLQ (242 aa)). Cystine bridges form between cysteine 27–cysteine 46, cysteine 29–cysteine 59, cysteine 38–cysteine 48, cysteine 66–cysteine 99, cysteine 110–cysteine 116, and cysteine 118–cysteine 135. N-linked (GlcNAc...) asparagine glycosylation is present at asparagine 37. A Thyroglobulin type-1 domain is found at 63-135 (ASKCLVMKAE…RTDKDSEISC (73 aa)). N-linked (GlcNAc...) asparagine glycosylation occurs at asparagine 111. Asparagine 198 carries N-linked (GlcNAc...) asparagine glycosylation. The chain crosses the membrane as a helical span at residues 266–288 (AGIIAVIAVVAIAIVAGIIVLIV). Over 289 to 314 (STKKRRAKYEKAEIKEMGEMHRELNA) the chain is Cytoplasmic.

The protein belongs to the EPCAM family. Monomer. Interacts with phosphorylated CLDN7. Glycosylation at Asn-198 is crucial for protein stability.

The protein resides in the lateral cell membrane. It localises to the cell junction. It is found in the tight junction. May act as a physical homophilic interaction molecule between intestinal epithelial cells (IECs) and intraepithelial lymphocytes (IELs) at the mucosal epithelium for providing immunological barrier as a first line of defense against mucosal infection. Plays a role in embryonic stem cells proliferation and differentiation. Up-regulates the expression of FABP5, MYC and cyclins A and E. In Sus scrofa (Pig), this protein is Epithelial cell adhesion molecule (TACSTD1).